The following is a 91-amino-acid chain: Putative regulatory protein Moth_0891 (91 aa).

Belongs to the RemA family.

The polypeptide is Putative regulatory protein Moth_0891 (Moorella thermoacetica (strain ATCC 39073 / JCM 9320)).